Consider the following 402-residue polypeptide: tRNA(Met) cytidine acetate ligase (402 aa).

ATP is bound by residues 7 to 20, Gly-102, Asn-171, and Arg-196; that span reads IAEYNPMHNGHIHH.

It belongs to the TmcAL family.

The protein resides in the cytoplasm. It catalyses the reaction cytidine(34) in elongator tRNA(Met) + acetate + ATP = N(4)-acetylcytidine(34) in elongator tRNA(Met) + AMP + diphosphate. In terms of biological role, catalyzes the formation of N(4)-acetylcytidine (ac(4)C) at the wobble position of elongator tRNA(Met), using acetate and ATP as substrates. First activates an acetate ion to form acetyladenylate (Ac-AMP) and then transfers the acetyl group to tRNA to form ac(4)C34. This chain is tRNA(Met) cytidine acetate ligase, found in Clostridium acetobutylicum (strain ATCC 824 / DSM 792 / JCM 1419 / IAM 19013 / LMG 5710 / NBRC 13948 / NRRL B-527 / VKM B-1787 / 2291 / W).